Consider the following 162-residue polypeptide: Glycine cleavage system H protein, mitochondrial (162 aa).

The transit peptide at 1–31 (MALRMWASSTANALRLSSATRPHFSPLSRCF) directs the protein to the mitochondrion. A Lipoyl-binding domain is found at 53-135 (VATIGITDHA…YEDGWMIKVK (83 aa)). K94 carries the N6-lipoyllysine modification.

The protein belongs to the GcvH family. As to quaternary structure, the glycine cleavage system is composed of four proteins: P, T, L and H. (R)-lipoate serves as cofactor.

Its subcellular location is the mitochondrion. In terms of biological role, the glycine cleavage system catalyzes the degradation of glycine. The H protein shuttles the methylamine group of glycine from the P protein to the T protein. This is Glycine cleavage system H protein, mitochondrial (GDCSH) from Flaveria anomala (Yellowtops).